Consider the following 175-residue polypeptide: Deoxyuridine 5'-triphosphate nucleotidohydrolase (175 aa).

Residues Arg-67–Gly-69, Asn-80, Thr-84–Asp-86, and Lys-94 each bind substrate. Residues Arg-138 to Gln-175 form a disordered region.

It belongs to the dUTPase family. Mg(2+) is required as a cofactor.

It carries out the reaction dUTP + H2O = dUMP + diphosphate + H(+). Its pathway is pyrimidine metabolism; dUMP biosynthesis; dUMP from dCTP (dUTP route): step 2/2. This enzyme is involved in nucleotide metabolism: it produces dUMP, the immediate precursor of thymidine nucleotides and it decreases the intracellular concentration of dUTP so that uracil cannot be incorporated into DNA. In Streptomyces avermitilis (strain ATCC 31267 / DSM 46492 / JCM 5070 / NBRC 14893 / NCIMB 12804 / NRRL 8165 / MA-4680), this protein is Deoxyuridine 5'-triphosphate nucleotidohydrolase.